The sequence spans 37 residues: MKVRASVKAICKDCKIVKRSGVVRVICANPKHKQRQG.

Belongs to the bacterial ribosomal protein bL36 family.

The polypeptide is Large ribosomal subunit protein bL36 (Ureaplasma urealyticum serovar 10 (strain ATCC 33699 / Western)).